Here is a 67-residue protein sequence, read N- to C-terminus: ATP synthase F(0) complex subunit 8 (67 aa).

Residues 8 to 24 (TWLIMILSMILTLFITF) form a helical membrane-spanning segment. Lysine 54 carries the post-translational modification N6-acetyllysine; alternate. Lysine 54 is modified (N6-succinyllysine; alternate). N6-acetyllysine is present on lysine 57.

This sequence belongs to the ATPase protein 8 family. Component of the ATP synthase complex composed at least of ATP5F1A/subunit alpha, ATP5F1B/subunit beta, ATP5MC1/subunit c (homooctomer), MT-ATP6/subunit a, MT-ATP8/subunit 8, ATP5ME/subunit e, ATP5MF/subunit f, ATP5MG/subunit g, ATP5MK/subunit k, ATP5MJ/subunit j, ATP5F1C/subunit gamma, ATP5F1D/subunit delta, ATP5F1E/subunit epsilon, ATP5PF/subunit F6, ATP5PB/subunit b, ATP5PD/subunit d, ATP5PO/subunit OSCP. ATP synthase complex consists of a soluble F(1) head domain (subunits alpha(3) and beta(3)) - the catalytic core - and a membrane F(0) domain - the membrane proton channel (subunits c, a, 8, e, f, g, k and j). These two domains are linked by a central stalk (subunits gamma, delta, and epsilon) rotating inside the F1 region and a stationary peripheral stalk (subunits F6, b, d, and OSCP). Interacts with PRICKLE3.

It localises to the mitochondrion membrane. Its function is as follows. Subunit 8, of the mitochondrial membrane ATP synthase complex (F(1)F(0) ATP synthase or Complex V) that produces ATP from ADP in the presence of a proton gradient across the membrane which is generated by electron transport complexes of the respiratory chain. ATP synthase complex consist of a soluble F(1) head domain - the catalytic core - and a membrane F(1) domain - the membrane proton channel. These two domains are linked by a central stalk rotating inside the F(1) region and a stationary peripheral stalk. During catalysis, ATP synthesis in the catalytic domain of F(1) is coupled via a rotary mechanism of the central stalk subunits to proton translocation. In vivo, can only synthesize ATP although its ATP hydrolase activity can be activated artificially in vitro. Part of the complex F(0) domain. The sequence is that of ATP synthase F(0) complex subunit 8 from Phoca vitulina (Harbor seal).